The sequence spans 429 residues: Adenylosuccinate synthetase (429 aa).

GTP contacts are provided by residues 12–18 and 40–42; these read GDEGKGK and GHT. The active-site Proton acceptor is D13. The Mg(2+) site is built by D13 and G40. Residues 13–16, 38–41, T128, R142, Q223, T238, and R302 contribute to the IMP site; these read DEGK and NAGH. The Proton donor role is filled by H41. 298–304 is a substrate binding site; the sequence is VNTGRPR. GTP is bound by residues R304, 330-332, and 412-414; these read KLD and GVG.

It belongs to the adenylosuccinate synthetase family. As to quaternary structure, homodimer. Mg(2+) is required as a cofactor.

The protein localises to the cytoplasm. It catalyses the reaction IMP + L-aspartate + GTP = N(6)-(1,2-dicarboxyethyl)-AMP + GDP + phosphate + 2 H(+). The protein operates within purine metabolism; AMP biosynthesis via de novo pathway; AMP from IMP: step 1/2. Functionally, plays an important role in the de novo pathway of purine nucleotide biosynthesis. Catalyzes the first committed step in the biosynthesis of AMP from IMP. The chain is Adenylosuccinate synthetase from Pseudarthrobacter chlorophenolicus (strain ATCC 700700 / DSM 12829 / CIP 107037 / JCM 12360 / KCTC 9906 / NCIMB 13794 / A6) (Arthrobacter chlorophenolicus).